The sequence spans 108 residues: Small ribosomal subunit protein bS6 (108 aa).

This sequence belongs to the bacterial ribosomal protein bS6 family.

Its function is as follows. Binds together with bS18 to 16S ribosomal RNA. The protein is Small ribosomal subunit protein bS6 of Nostoc sp. (strain PCC 7120 / SAG 25.82 / UTEX 2576).